An 86-amino-acid chain; its full sequence is Small ribosomal subunit protein bS20 (86 aa).

Belongs to the bacterial ribosomal protein bS20 family.

Functionally, binds directly to 16S ribosomal RNA. The polypeptide is Small ribosomal subunit protein bS20 (Rhodococcus jostii (strain RHA1)).